The primary structure comprises 312 residues: NAD(P)(+)--arginine ADP-ribosyltransferase 1 (312 aa).

The signal sequence occupies residues 1 to 20 (MELLALRWVLLAGTLLSTSA). Positions 21-31 (ASSALQEGDLG) are excised as a propeptide. Cystine bridges form between cysteine 51/cysteine 260 and cysteine 159/cysteine 208. One can recognise a TR mART core domain in the interval 71–256 (IAYAVTWRQA…IQLHSKGKMS (186 aa)). Residues tyrosine 108, arginine 164, and glutamine 183 each contribute to the NAD(+) site. Residue arginine 164 is part of the active site. The active site involves serine 186. Position 217 (serine 217) interacts with NAD(+). Glutamate 224 is an active-site residue. A propeptide spanning residues 267-312 (GGQWGRGHQEVGLGLSPGLSLPVLPCRRRVWEGLGHREGDPIPAAV) is cleaved from the precursor.

The protein belongs to the Arg-specific ADP-ribosyltransferase family.

The protein localises to the secreted. The protein resides in the extracellular space. It carries out the reaction L-arginyl-[protein] + NAD(+) = N(omega)-(ADP-D-ribosyl)-L-arginyl-[protein] + nicotinamide + H(+). This Gallus gallus (Chicken) protein is NAD(P)(+)--arginine ADP-ribosyltransferase 1.